A 913-amino-acid chain; its full sequence is Collagen alpha-2(I) chain (913 aa).

Residues 1 to 913 are disordered; it reads SGGFDFSFLP…FGYEGDFYRA (913 aa). Residues Pro-10, Pro-13, Pro-35, and Pro-41 each carry the 4-hydroxyproline modification. Low complexity-rich tracts occupy residues 28-67, 125-154, and 199-220; these read LMGPRGPPGASGAPGPQGFQGPAGEPGEPGQTGPAGARGP, VGAPGPAGARGSDGSVGPVGPAGPIGSAGP, and PGANGLTGAKGAAGLPGVAGAP. The span at 254–263 shows a compositional bias: gly residues; the sequence is GESGGKGEPG. Low complexity predominate over residues 264–274; that stretch reads SAGPQGPPGSS. Residues 281 to 303 show a composition bias toward gly residues; it reads GPNGGSTGPTGPPGLRGGPGSRG. Low complexity predominate over residues 316-332; that stretch reads PAGARGASGPAGVRGPS. 4-hydroxyproline occurs at positions 338 and 341. 2 stretches are compositionally biased toward low complexity: residues 367–386 and 408–421; these read LPGIDGRPGPIGPAGARGEA and PDGNNGAQGPPGLQ. Over residues 422 to 431 the composition is skewed to gly residues; the sequence is GVQGGKGTTG. Low complexity-rich tracts occupy residues 459 to 476 and 488 to 498; these read PGESGAVGPSGAIGSRGP and EPGVVGAPGTA. Over residues 499–517 the composition is skewed to gly residues; the sequence is GPAGSGGPGERGAAGIPGG. Low complexity-rich tracts occupy residues 527–574 and 581–601; these read RGEV…PRGS and VGPAGPNGFAGPAGAAGQPGA. Over residues 602-611 the composition is skewed to basic and acidic residues; that stretch reads KGERGTKGPK. A compositionally biased stretch (low complexity) spans 619–629; sequence PTGPVGSAGPA. Over residues 639–648 the composition is skewed to gly residues; the sequence is GSRGDGGPPG. The span at 650–659 shows a compositional bias: low complexity; the sequence is TGFPGAAGRT. Gly residues predominate over residues 696–705; the sequence is GETGAGGPPG. 2 stretches are compositionally biased toward low complexity: residues 713-740 and 748-758; these read SGEPGTAGPPGTAGPQGLLGAPGILGLP and LPGVAGAVGEP. Residues 759-776 are compositionally biased toward gly residues; that stretch reads GPLGIGPPGARGPSGAGK. Positions 782-797 are enriched in low complexity; the sequence is EPGPVGSVGPVGALGP. The segment covering 807–818 has biased composition (basic and acidic residues); that stretch reads RGDKGEPGEKGP. The segment covering 883-895 has biased composition (pro residues); it reads SGPPGPPGPPGPP.

Belongs to the fibrillar collagen family. Trimers of one alpha 2(I) and two alpha 1(I) chains. Interacts (via C-terminus) with TMEM131 (via PapD-L domain); the interaction is direct and is involved in assembly and TRAPPIII ER-to-Golgi transport complex-dependent secretion of collagen. Post-translationally, prolines at the third position of the tripeptide repeating unit (G-X-Y) are hydroxylated in some or all of the chains. Expressed in bones.

The protein resides in the secreted. The protein localises to the extracellular space. It is found in the extracellular matrix. In terms of biological role, type I collagen is a member of group I collagen (fibrillar forming collagen). The protein is Collagen alpha-2(I) chain of Parocnus serus (Greater Haitian ground sloth).